The sequence spans 243 residues: Secreted RxLR effector protein 28 (243 aa).

The first 26 residues, 1–26 (MHVSRIIAHIALATAITATTVSPTDA), serve as a signal peptide directing secretion. Residues 49-52 (RGLR) carry the RxLR motif. Residues 187-243 (NVDEDKGQNFGHSVSGPPTTTLTGPHTKSGIPPFENLVAPAKGSMPNTRRNGYQFFE) are disordered. Low complexity predominate over residues 199–216 (SVSGPPTTTLTGPHTKSG).

Belongs to the RxLR effector family.

It is found in the secreted. The protein localises to the host cytoplasm. The protein resides in the host nucleus. Functionally, effector that significantly enhances susceptibilities of grapevine and tobacco to pathogens. Acts as a broad suppressor of cell death to interrupt plant immunity. Completely inhibits cell death induced by cell death-inducing proteins, including the PAMP elicitor INF1 from P.infestans. Reduces the transcriptional levels of the defense-related genes and impairs the H(2)O(2) accumulation in N.benthamiana. The polypeptide is Secreted RxLR effector protein 28 (Plasmopara viticola (Downy mildew of grapevine)).